The sequence spans 119 residues: MRIYETMFIIKPDIAEEEREKIAQGVVDYLKEKLGAHVDNVDRWGIRKTAYPLKKYNEADYTIVYFRGEGLDITVLESYFRVRPEFLRWQTFRRIDLEKKEKKQSRKEEGSENSEKVEE.

A disordered region spans residues 99–119 (KKEKKQSRKEEGSENSEKVEE).

This sequence belongs to the bacterial ribosomal protein bS6 family.

Functionally, binds together with bS18 to 16S ribosomal RNA. The chain is Small ribosomal subunit protein bS6 from Thermosipho melanesiensis (strain DSM 12029 / CIP 104789 / BI429).